A 220-amino-acid polypeptide reads, in one-letter code: Ribosomal RNA small subunit methyltransferase Nep1 (220 aa).

S-adenosyl-L-methionine contacts are provided by residues Gly178, Gly183, and 196–201; that span reads IYKEPL.

This sequence belongs to the class IV-like SAM-binding methyltransferase superfamily. RNA methyltransferase NEP1 family. Homodimer.

The catalysed reaction is a pseudouridine in rRNA + S-adenosyl-L-methionine = an N(1)-methylpseudouridine in rRNA + S-adenosyl-L-homocysteine + H(+). Methyltransferase involved in ribosomal biogenesis. Specifically catalyzes the N1-methylation of the pseudouridine corresponding to position 914 in M.jannaschii 16S rRNA. The polypeptide is Ribosomal RNA small subunit methyltransferase Nep1 (Thermococcus sibiricus (strain DSM 12597 / MM 739)).